We begin with the raw amino-acid sequence, 549 residues long: MKNINPTQTSAWQALQKHYDEMKDVTIAELFAKDSDRFAKFSATFDDLMLVDFSKNRITEETLAKLQDLAKETDLAGAIKSMFSGEKINRTEDRAVLHVALRNRSNTPIIVDDKDVMPEVNAVLEKMKTFSEAIISGQWKGYTGKAITDVVNIGIGGSDLGPFMVTEALRPYKNHLNMHFVSNVDGTHIAEVLKKVNPETTLFLVASKTFTTQETMTNAHSARDWFLKTAGDEKHVAKHFAALSTNAKAVGEFGIDTANMFEFWDWVGGRYSLWSAIGLSIILSVGFDNFVELLSGAHAMDKHFSTTPAEKNLPVLLALIGIWYNNFFGAETEAILPYDQYMHRFAAYFQQGNMESNGKYVDRNGNAVDYQTGPIIWGEPGTNGQHAFYQLIHQGTKMVPCDFIAPAITHNPLSDHHQKLLSNFFAQTEALAFGKSREVVEQEYRDQGKDPAQLEHVVPFKVFEGNRPTNSILLREITPYSLGALIALYEHKIFTQGAILNIFTFDQWGVELGKQLANRILPELGDDKAISSHDSSTNGLINRYKAWRA.

The active-site Proton donor is the Glu355. Active-site residues include His386 and Lys514.

It belongs to the GPI family.

The protein resides in the cytoplasm. It carries out the reaction alpha-D-glucose 6-phosphate = beta-D-fructose 6-phosphate. It functions in the pathway carbohydrate biosynthesis; gluconeogenesis. Its pathway is carbohydrate degradation; glycolysis; D-glyceraldehyde 3-phosphate and glycerone phosphate from D-glucose: step 2/4. In terms of biological role, catalyzes the reversible isomerization of glucose-6-phosphate to fructose-6-phosphate. This chain is Glucose-6-phosphate isomerase, found in Salmonella arizonae (strain ATCC BAA-731 / CDC346-86 / RSK2980).